Reading from the N-terminus, the 209-residue chain is Redox-sensing transcriptional repressor Rex (209 aa).

The H-T-H motif DNA-binding region spans 16–55; it reads LYYRFIQNLSLSGKQRVSSAELSEAVKVDSATIRRDFSYF. 90–95 is an NAD(+) binding site; the sequence is GVGNLG.

It belongs to the transcriptional regulatory Rex family. Homodimer.

The protein resides in the cytoplasm. Its function is as follows. Modulates transcription in response to changes in cellular NADH/NAD(+) redox state. This is Redox-sensing transcriptional repressor Rex from Bacillus cytotoxicus (strain DSM 22905 / CIP 110041 / 391-98 / NVH 391-98).